A 326-amino-acid polypeptide reads, in one-letter code: Membrane-associated kinase regulator 5 (326 aa).

Disordered stretches follow at residues 188-239 and 267-326; these read TKKQ…GMSP and GSRE…KISD. Low complexity-rich tracts occupy residues 190 to 202 and 270 to 305; these read KQSS…PTSS and ESSL…SSDS.

As to expression, expressed in roots.

The protein resides in the cell membrane. It localises to the cytoplasm. It is found in the cytosol. Positive effector of CLE45 peptide signaling. Post-transcriptionally regulated amplifier of the CLE45 peptide signal that acts downstream of BAM3 in the regulation of the transition of root protophloem cells from proliferation to differentiation; thus preventing primary root elongation but stimulating lateral roots development. This chain is Membrane-associated kinase regulator 5, found in Arabidopsis thaliana (Mouse-ear cress).